A 90-amino-acid chain; its full sequence is Acylphosphatase (90 aa).

The Acylphosphatase-like domain maps to 5 to 90 (SFVVRVWGLV…PPKGSGFHTN (86 aa)). Active-site residues include arginine 20 and asparagine 38.

It belongs to the acylphosphatase family.

The catalysed reaction is an acyl phosphate + H2O = a carboxylate + phosphate + H(+). The sequence is that of Acylphosphatase (acyP) from Aeromonas hydrophila subsp. hydrophila (strain ATCC 7966 / DSM 30187 / BCRC 13018 / CCUG 14551 / JCM 1027 / KCTC 2358 / NCIMB 9240 / NCTC 8049).